The sequence spans 450 residues: MREIISIHIGQAGIQVGNSCWELYCLEHGIQPDGTMPSDSTVGACHDAFNTFFSETSSGQHVPRAVFLDLEPTVIDEVRTGTYRQLFHPEQLISGKEDAANNFARGHYTVGREIVDTCLERLRKLADNCTGLQGFLVFNAVGGGTGSGLGSLLLERLSVDFGKKSKLGFTIYPSPQVSTAVVEPYNSVLSTHSLLEHTDVVVLLDNEAIYDICRRSLDIERPTYSNLNRLISQTISSLTTSLRFDGAINVDITEFQTNLVPYPRIHFMLSSYAPVISSAKAYHEQFSVPEITTSVFEPSNMMAKCDPRHGKYMACCLMYRGDVVPKDVNTAVAAIKAKRTIQFVDWCPTGFKCGINYQPPSVVPGGDLAKVQRAVCMISNNTAVAEVFSRIDHKFDLMYSKRAFVHWYVGEGMEEGEFSEAREDLAALEKDYEEVGGEGAEDDDEEGDEY.

Positions 11, 71, 144, 145, 179, 206, and 228 each coordinate GTP. E71 contributes to the Mg(2+) binding site. E254 is a catalytic residue. Position 349 is a phosphothreonine (T349). A disordered region spans residues 431–450; that stretch reads DYEEVGGEGAEDDDEEGDEY.

The protein belongs to the tubulin family. As to quaternary structure, dimer of alpha and beta chains. A typical microtubule is a hollow water-filled tube with an outer diameter of 25 nm and an inner diameter of 15 nM. Alpha-beta heterodimers associate head-to-tail to form protofilaments running lengthwise along the microtubule wall with the beta-tubulin subunit facing the microtubule plus end conferring a structural polarity. Microtubules usually have 13 protofilaments but different protofilament numbers can be found in some organisms and specialized cells. Requires Mg(2+) as cofactor. Undergoes a tyrosination/detyrosination cycle, the cyclic removal and re-addition of a C-terminal tyrosine residue by the enzymes tubulin tyrosine carboxypeptidase (TTCP) and tubulin tyrosine ligase (TTL), respectively.

The protein localises to the cytoplasm. The protein resides in the cytoskeleton. The catalysed reaction is GTP + H2O = GDP + phosphate + H(+). Tubulin is the major constituent of microtubules, a cylinder consisting of laterally associated linear protofilaments composed of alpha- and beta-tubulin heterodimers. Microtubules grow by the addition of GTP-tubulin dimers to the microtubule end, where a stabilizing cap forms. Below the cap, tubulin dimers are in GDP-bound state, owing to GTPase activity of alpha-tubulin. In Arabidopsis thaliana (Mouse-ear cress), this protein is Tubulin alpha-1 chain (TUBA1).